The primary structure comprises 544 residues: Protein angel homolog 2 (544 aa).

The protein belongs to the CCR4/nocturin family.

The polypeptide is Protein angel homolog 2 (ANGEL2) (Homo sapiens (Human)).